A 352-amino-acid polypeptide reads, in one-letter code: C-C chemokine receptor type 5 (352 aa).

Residues 1–30 (MDYQVSSPTYDIDYYTSEPCQKVNVKQIAA) are Extracellular-facing. Tyr-3 carries the post-translational modification Sulfotyrosine. O-linked (GalNAc...) serine glycosylation is found at Ser-6 and Ser-7. Sulfotyrosine occurs at positions 10, 14, and 15. Intrachain disulfides connect Cys-20–Cys-269 and Cys-101–Cys-178. The chain crosses the membrane as a helical span at residues 31 to 58 (RLLPPLYSLVFIFGFVGNILVVLILINC). At 59–68 (KRLKSMTDIY) the chain is on the cytoplasmic side. A helical membrane pass occupies residues 69 to 89 (LLNLAISDLFFLLTVPFWAHY). The Extracellular portion of the chain corresponds to 90 to 102 (AAAQWDFGNTMCQ). The chain crosses the membrane as a helical span at residues 103-124 (LLTGLYFIGFFSGIFFIILLTI). Residues 125–141 (DRYLAIVHAVFALKART) are Cytoplasmic-facing. A helical membrane pass occupies residues 142-166 (VTFGVVTSVITWVVAVFASLPGIIF). Topologically, residues 167 to 198 (TRSQREGLHYTCSSHFPYSQYQFWKNFQTLKI) are extracellular. The helical transmembrane segment at 199-218 (VILGLVLPLLIMVICYSGIL) threads the bilayer. Residues 219–235 (KTLLRCRNEKKRHRAVR) are Cytoplasmic-facing. A helical transmembrane segment spans residues 236 to 260 (LIFTIMIVYFLFWAPYNIVLLLNTF). The Extracellular portion of the chain corresponds to 261 to 277 (QEFFGLNNCSSSNRLDQ). Residues 278–301 (AMQVTETLGMTHCCINPIIYAFVG) traverse the membrane as a helical segment. The Cytoplasmic segment spans residues 302-352 (EKFRNYLLVFFQKHIAKRFCKCCSIFQQEAPERASSVYTRSTGEHEISVGL). 3 S-palmitoyl cysteine lipidation sites follow: Cys-321, Cys-323, and Cys-324. A phosphoserine; by BARK1 mark is found at Ser-336, Ser-337, Ser-342, and Ser-349.

This sequence belongs to the G-protein coupled receptor 1 family. Interacts with PRAF2. Efficient ligand binding to CCL3/MIP-1alpha and CCL4/MIP-1beta requires sulfation, O-glycosylation and sialic acid modifications. Glycosylation on Ser-6 is required for efficient binding of CCL4. Interacts with GRK2. Interacts with ARRB1 and ARRB2. Interacts with CNIH4. Interacts with S100A4; this interaction stimulates T-lymphocyte chemotaxis. Post-translationally, sulfated on at least 2 of the N-terminal tyrosines. Sulfation is required for efficient binding of the chemokines, CCL3 and CCL4. Palmitoylation in the C-terminal is important for cell surface expression. In terms of processing, phosphorylation on serine residues in the C-terminal is stimulated by binding CC chemokines especially by APO-RANTES. Post-translationally, O-glycosylated, but not N-glycosylated. Ser-6 appears to be the major site even if Ser-7 may be also O-glycosylated. Also sialylated glycans present which contribute to chemokine binding. Thr-16 and Ser-17 may also be glycosylated and, if so, with small moieties such as a T-antigen.

The protein resides in the cell membrane. In terms of biological role, receptor for a number of inflammatory CC-chemokines including CCL3/MIP-1-alpha, CCL4/MIP-1-beta and RANTES and subsequently transduces a signal by increasing the intracellular calcium ion level. May play a role in the control of granulocytic lineage proliferation or differentiation. Participates in T-lymphocyte migration to the infection site by acting as a chemotactic receptor. The sequence is that of C-C chemokine receptor type 5 (CCR5) from Pygathrix nemaeus (Red-shanked douc langur).